The chain runs to 242 residues: ATP synthase subunit b 2 (242 aa).

A helical transmembrane segment spans residues 4–24 (LLAISSLTLLASLVLLVVSPA). Residues 43 to 74 (ADSEDGDHDHDHEGDDHGHDEAAGDEHGHGDG) form a disordered region. Basic and acidic residues predominate over residues 49–74 (DHDHDHEGDDHGHDEAAGDEHGHGDG).

The protein belongs to the ATPase B chain family. As to quaternary structure, F-type ATPases have 2 components, F(1) - the catalytic core - and F(0) - the membrane proton channel. F(1) has five subunits: alpha(3), beta(3), gamma(1), delta(1), epsilon(1). F(0) has three main subunits: a(1), b(2) and c(10-14). The alpha and beta chains form an alternating ring which encloses part of the gamma chain. F(1) is attached to F(0) by a central stalk formed by the gamma and epsilon chains, while a peripheral stalk is formed by the delta and b chains.

Its subcellular location is the cell inner membrane. Functionally, f(1)F(0) ATP synthase produces ATP from ADP in the presence of a proton or sodium gradient. F-type ATPases consist of two structural domains, F(1) containing the extramembraneous catalytic core and F(0) containing the membrane proton channel, linked together by a central stalk and a peripheral stalk. During catalysis, ATP synthesis in the catalytic domain of F(1) is coupled via a rotary mechanism of the central stalk subunits to proton translocation. Component of the F(0) channel, it forms part of the peripheral stalk, linking F(1) to F(0). The chain is ATP synthase subunit b 2 from Rhodopirellula baltica (strain DSM 10527 / NCIMB 13988 / SH1).